A 400-amino-acid chain; its full sequence is Laminin subunit B (400 aa).

3 consecutive Laminin EGF-like domains span residues 1–5 (EGCKP), 6–53 (CECD…GCKS), and 54–100 (CTCN…QCIP). Intrachain disulfides connect Cys6/Cys18, Cys8/Cys25, Cys27/Cys36, Cys39/Cys51, Cys54/Cys66, Cys56/Cys73, Cys75/Cys84, and Cys87/Cys98. Residues 101–400 (CGECFDNWDK…AEAKNNAHEA (300 aa)) are domain II and I. Residues 140-235 (KEFEELEQVL…RENALEIQEQ (96 aa)) adopt a coiled-coil conformation. N-linked (GlcNAc...) asparagine glycans are attached at residues Asn160, Asn175, Asn216, Asn266, Asn283, Asn310, and Asn356. Residues 353–400 (EAKNTSRKAEELIKSKYRSTSSTLSELENSNKQCKQATAEAKNNAHEA) adopt a coiled-coil conformation. Positions 369–400 (YRSTSSTLSELENSNKQCKQATAEAKNNAHEA) are disordered. The segment covering 371–383 (STSSTLSELENSN) has biased composition (low complexity).

In terms of assembly, laminin is a complex glycoprotein, consisting of three different polypeptide chains (alpha, beta, gamma), which are bound to each other by disulfide bonds into a cross-shaped molecule comprising one long and three short arms with globules at each end. Individual glial and muscle cells.

It is found in the secreted. It localises to the extracellular space. The protein resides in the extracellular matrix. Functionally, binding to cells via a high affinity receptor, laminin is thought to mediate the attachment, migration and organization of cells into tissues during embryonic development by interacting with other extracellular matrix components. This chain is Laminin subunit B, found in Hirudo medicinalis (Medicinal leech).